The chain runs to 557 residues: Formate--tetrahydrofolate ligase (557 aa).

An ATP-binding site is contributed by 66-73; sequence TPAGEGKS.

This sequence belongs to the formate--tetrahydrofolate ligase family.

It carries out the reaction (6S)-5,6,7,8-tetrahydrofolate + formate + ATP = (6R)-10-formyltetrahydrofolate + ADP + phosphate. It functions in the pathway one-carbon metabolism; tetrahydrofolate interconversion. The sequence is that of Formate--tetrahydrofolate ligase from Clostridium botulinum (strain Okra / Type B1).